The chain runs to 275 residues: Large ribosomal subunit protein uL2 (275 aa).

A disordered region spans residues R221–K275.

This sequence belongs to the universal ribosomal protein uL2 family. As to quaternary structure, part of the 50S ribosomal subunit. Forms a bridge to the 30S subunit in the 70S ribosome.

In terms of biological role, one of the primary rRNA binding proteins. Required for association of the 30S and 50S subunits to form the 70S ribosome, for tRNA binding and peptide bond formation. It has been suggested to have peptidyltransferase activity; this is somewhat controversial. Makes several contacts with the 16S rRNA in the 70S ribosome. The polypeptide is Large ribosomal subunit protein uL2 (Kosmotoga olearia (strain ATCC BAA-1733 / DSM 21960 / TBF 19.5.1)).